Reading from the N-terminus, the 353-residue chain is Photosystem II protein D1 (353 aa).

Position 2 is an N-acetylthreonine (Thr2). At Thr2 the chain carries Phosphothreonine. The next 3 helical transmembrane spans lie at 29–46 (YIGW…TATS), 118–133 (HFLL…EWEL), and 142–156 (WIAV…AATA). His118 contacts chlorophyll a. Tyr126 contributes to the pheophytin a binding site. Positions 170 and 189 each coordinate [CaMn4O5] cluster. The helical transmembrane segment at 197-218 (FHMLGVAGVFGGSLFSAMHGSL) threads the bilayer. His198 is a chlorophyll a binding site. Residues His215 and 264–265 (SF) contribute to the a quinone site. His215 serves as a coordination point for Fe cation. His272 is a binding site for Fe cation. Residues 274–288 (FLTAWPVVGIWFTAL) form a helical membrane-spanning segment. 4 residues coordinate [CaMn4O5] cluster: His332, Glu333, Asp342, and Ala344. The propeptide occupies 345–353 (AVEAPSTNG).

This sequence belongs to the reaction center PufL/M/PsbA/D family. In terms of assembly, PSII is composed of 1 copy each of membrane proteins PsbA, PsbB, PsbC, PsbD, PsbE, PsbF, PsbH, PsbI, PsbJ, PsbK, PsbL, PsbM, PsbT, PsbX, PsbY, PsbZ, Psb30/Ycf12, at least 3 peripheral proteins of the oxygen-evolving complex and a large number of cofactors. It forms dimeric complexes. The D1/D2 heterodimer binds P680, chlorophylls that are the primary electron donor of PSII, and subsequent electron acceptors. It shares a non-heme iron and each subunit binds pheophytin, quinone, additional chlorophylls, carotenoids and lipids. D1 provides most of the ligands for the Mn4-Ca-O5 cluster of the oxygen-evolving complex (OEC). There is also a Cl(-1) ion associated with D1 and D2, which is required for oxygen evolution. The PSII complex binds additional chlorophylls, carotenoids and specific lipids. is required as a cofactor. In terms of processing, tyr-161 forms a radical intermediate that is referred to as redox-active TyrZ, YZ or Y-Z. Post-translationally, C-terminally processed by CTPA; processing is essential to allow assembly of the oxygen-evolving complex and thus photosynthetic growth.

The protein resides in the plastid. It is found in the chloroplast thylakoid membrane. The catalysed reaction is 2 a plastoquinone + 4 hnu + 2 H2O = 2 a plastoquinol + O2. Photosystem II (PSII) is a light-driven water:plastoquinone oxidoreductase that uses light energy to abstract electrons from H(2)O, generating O(2) and a proton gradient subsequently used for ATP formation. It consists of a core antenna complex that captures photons, and an electron transfer chain that converts photonic excitation into a charge separation. The D1/D2 (PsbA/PsbD) reaction center heterodimer binds P680, the primary electron donor of PSII as well as several subsequent electron acceptors. In Barbarea verna (Land cress), this protein is Photosystem II protein D1.